We begin with the raw amino-acid sequence, 529 residues long: Aldehyde dehydrogenase 1 (529 aa).

Residue 251–256 (GSTYVG) coordinates NAD(+). Active-site residues include Glu273 and Cys307.

It belongs to the aldehyde dehydrogenase family.

The enzyme catalyses an aldehyde + NAD(+) + H2O = a carboxylate + NADH + 2 H(+). In Entamoeba histolytica (strain ATCC 30459 / HM-1:IMSS / ABRM), this protein is Aldehyde dehydrogenase 1.